The primary structure comprises 241 residues: Probable transcriptional regulatory protein AZOSEA20720 (241 aa).

The disordered stretch occupies residues 1 to 21 (MAGHSKWANIQHRKGRQDAKR).

It belongs to the TACO1 family.

Its subcellular location is the cytoplasm. This chain is Probable transcriptional regulatory protein AZOSEA20720, found in Aromatoleum aromaticum (strain DSM 19018 / LMG 30748 / EbN1) (Azoarcus sp. (strain EbN1)).